A 130-amino-acid chain; its full sequence is DNA-directed RNA polymerase subunit omega (130 aa).

The segment at 110–130 is disordered; sequence EELLKGLEGLAPPEEQPEEEE.

The protein belongs to the RNA polymerase subunit omega family. In terms of assembly, the RNAP catalytic core consists of 2 alpha, 1 beta, 1 beta' and 1 omega subunit. When a sigma factor is associated with the core the holoenzyme is formed, which can initiate transcription.

The enzyme catalyses RNA(n) + a ribonucleoside 5'-triphosphate = RNA(n+1) + diphosphate. In terms of biological role, promotes RNA polymerase assembly. Latches the N- and C-terminal regions of the beta' subunit thereby facilitating its interaction with the beta and alpha subunits. This Afipia carboxidovorans (strain ATCC 49405 / DSM 1227 / KCTC 32145 / OM5) (Oligotropha carboxidovorans) protein is DNA-directed RNA polymerase subunit omega.